A 163-amino-acid chain; its full sequence is Lipoprotein signal peptidase (163 aa).

The next 3 membrane-spanning stretches (helical) occupy residues 4-24, 66-86, and 92-112; these read SAAL…LLIL, LDAW…AWLW, and DHQF…GNII. Residues Asp122 and Asp140 contribute to the active site. The helical transmembrane segment at 132-152 threads the bilayer; that stretch reads SFAVFNLADSLITIGAGFILL.

Belongs to the peptidase A8 family.

It is found in the cell inner membrane. The enzyme catalyses Release of signal peptides from bacterial membrane prolipoproteins. Hydrolyzes -Xaa-Yaa-Zaa-|-(S,diacylglyceryl)Cys-, in which Xaa is hydrophobic (preferably Leu), and Yaa (Ala or Ser) and Zaa (Gly or Ala) have small, neutral side chains.. Its pathway is protein modification; lipoprotein biosynthesis (signal peptide cleavage). Functionally, this protein specifically catalyzes the removal of signal peptides from prolipoproteins. The chain is Lipoprotein signal peptidase from Allorhizobium ampelinum (strain ATCC BAA-846 / DSM 112012 / S4) (Agrobacterium vitis (strain S4)).